Consider the following 913-residue polypeptide: Cadherin-4 (913 aa).

A signal peptide spans 1-19; that stretch reads MRTGSRLLLVLLVWGSAAA. The propeptide occupies 20–166; sequence LNGDLTVRPT…SAKGLRRQKR (147 aa). 5 Cadherin domains span residues 167 to 274, 275 to 389, 390 to 504, 505 to 610, and 611 to 721; these read DWVI…RPEF, INQV…PPEF, TTST…APYF, PTNH…DNAP, and ELLP…TIGA. The Extracellular segment spans residues 167–731; sequence DWVIPPINVP…VAAAGLGTGA (565 aa). Residues Asn280, Asn409, Asn554, Asn629, Asn658, and Asn699 are each glycosylated (N-linked (GlcNAc...) asparagine). The helical transmembrane segment at 732 to 753 threads the bilayer; that stretch reads IIAILICIIILLTMVLLFVVWM. Residues 754-913 lie on the Cytoplasmic side of the membrane; that stretch reads KRREKERHTK…ADMYGGGEED (160 aa).

As to expression, embryonic brain and neuronal retina.

Its subcellular location is the cell membrane. In terms of biological role, cadherins are calcium-dependent cell adhesion proteins. They preferentially interact with themselves in a homophilic manner in connecting cells; cadherins may thus contribute to the sorting of heterogeneous cell types. May play an important role in retinal development. This Gallus gallus (Chicken) protein is Cadherin-4 (CDH4).